Reading from the N-terminus, the 655-residue chain is Hepatocyte growth factor activator serine protease (655 aa).

The N-terminal stretch at 1–35 (MGRWAWVPSPWPPPGLGPFLLLLLLLLLLPRGFQP) is a signal peptide. Residues 36 to 372 (QPGGNRTESP…RLEACESLTR (337 aa)) constitute a propeptide, removed in mature form. N-linked (GlcNAc...) asparagine glycans are attached at residues Asn40 and Asn48. The disordered stretch occupies residues 64 to 102 (TSETPATSAPEAEGPQSGGLPPPPRAVPSSSSPQAQALT). The Fibronectin type-II domain occupies 103–150 (EDGRPCRFPFRYGGRMLHACTSEGSAHRKWCATTHNYDRDRAWGYCVE). 19 cysteine pairs are disulfide-bonded: Cys108–Cys133, Cys122–Cys148, Cys164–Cys175, Cys169–Cys186, Cys188–Cys197, Cys202–Cys230, Cys228–Cys237, Cys245–Cys256, Cys250–Cys267, Cys269–Cys278, Cys286–Cys367, Cys307–Cys349, Cys338–Cys362, Cys394–Cys521, Cys432–Cys448, Cys440–Cys510, Cys535–Cys604, Cys567–Cys583, and Cys594–Cys622. The EGF-like 1 domain occupies 160–198 (ALDPCASGPCLNGGSCSNTQDPQSYHCSCPRAFTGKDCG). The region spanning 200 to 240 (EKCFDETRYEYLEGGDRWARVRQGHVEQCECFGGRTWCEGT) is the Fibronectin type-I domain. The EGF-like 2 domain maps to 241-279 (RHTACLSSPCLNGGTCHLIVATGTTVCACPPGFAGRLCN). Positions 286–367 (CFLGNGTGYR…SWEYCRLEAC (82 aa)) constitute a Kringle domain. A glycan (N-linked (GlcNAc...) asparagine) is linked at Asn290. The 239-residue stretch at 408–646 (IIGGSSSLPG…YVDWINDRIR (239 aa)) folds into the Peptidase S1 domain. The Charge relay system role is filled by His447. Residues Asn468 and Asn492 are each glycosylated (N-linked (GlcNAc...) asparagine). The active-site Charge relay system is Asp497. Residue Asn546 is glycosylated (N-linked (GlcNAc...) asparagine). The active-site Charge relay system is the Ser598.

The protein belongs to the peptidase S1 family. Heterodimer of a short chain and a long chain linked by a disulfide bond. Post-translationally, the active form of HGFAC presents in the serum is derived from the COOH-terminal region of the precursor by the cleavage of bonds between Arg-372 and Val-373 and Arg-407 and Ile-408. In terms of tissue distribution, liver.

The protein localises to the secreted. In terms of biological role, serine protease that hydrolyzes the inactive zymogen hepatocyte growth factor (HGFsc) to an activated disulfide-linked heterodimer, then initiating hepatocyte growth factor receptor signaling pathway. In Homo sapiens (Human), this protein is Hepatocyte growth factor activator serine protease.